The chain runs to 1407 residues: Enhancer of mRNA-decapping protein 4 (1407 aa).

At A2 the chain carries N-acetylalanine. 2 positions are modified to phosphoserine: S3 and S6. K125 bears the N6-acetyllysine mark. WD repeat units lie at residues 174–214 (GFTG…GKIQ), 230–277 (NHFR…SSHS), 295–334 (GHSTCLSEGALSPDGTVLATASHDGFVKFWQIYIEGQDEP), and 342–393 (PHDG…CLQT). The tract at residues 547–566 (GESRPELGSEGLASAPHGSQ) is disordered. Phosphoserine occurs at positions 560, 565, 583, and 585. Disordered regions lie at residues 604 to 632 (SLQQISASPSSSSSSSSSSSSSSSSSSSS) and 673 to 745 (SSSS…STAL). Composition is skewed to low complexity over residues 609 to 632 (SASPSSSSSSSSSSSSSSSSSSSS) and 673 to 693 (SSSSSLQASPRSLLPGLLPGP). S681, S713, S728, and S730 each carry phosphoserine. Polar residues predominate over residues 727–745 (ASPSRTRSPDVISSASTAL). A Phosphothreonine modification is found at T732. A phosphoserine mark is found at S734 and S746. The disordered stretch occupies residues 787 to 817 (PRPRQGPELSSQLGLDGGPGDGDRHSTPSLL). T827 carries the post-translational modification Phosphothreonine. S850 and S877 each carry phosphoserine. The segment at 875-951 (HDSQDTSAEQ…SRLTEHQVVE (77 aa)) is disordered. T880 bears the Phosphothreonine mark. S881, S885, S893, S896, and S898 each carry phosphoserine. T907 is subject to Phosphothreonine. The stretch at 972–1031 (HNQEELLQRLCAQLEGLQSTVTDHVERALETRHEQEQRRLERALAEGQQRGGQLQEQLTQ) forms a coiled coil. Phosphoserine is present on S1386.

It belongs to the WD repeat EDC4 family. Part of a decapping complex consisting of DCP1A, DCP2, EDC3, EDC4 and probably DDX6. Part of a complex consisting of DCP1A, EDC3, EDC4 and DDX6. Part of a complex consisting of DCP1B, EDC3, EDC4 and DDX6. Interacts with DCP2. Interacts with NBDY. Interacts with Tex19.1. Interacts with LSM14A. Interacts with DDX6.

The protein resides in the cytoplasm. It is found in the P-body. It localises to the nucleus. In terms of biological role, in the process of mRNA degradation, seems to play a role in mRNA decapping. Component of a complex containing DCP2 and DCP1A which functions in decapping of ARE-containing mRNAs. Promotes complex formation between DCP1A and DCP2. Enhances the catalytic activity of DCP2 (in vitro). The sequence is that of Enhancer of mRNA-decapping protein 4 (Edc4) from Rattus norvegicus (Rat).